A 311-amino-acid chain; its full sequence is ATP synthase subunit a (311 aa).

6 consecutive transmembrane segments (helical) span residues 62–82 (AVHV…GFIF), 123–143 (IAPM…MDLI), 170–190 (DPNA…MFSI), 213–233 (LWYL…VALI), 253–273 (IFIL…VGGV), and 276–296 (WAWA…FMVL).

Belongs to the ATPase A chain family. As to quaternary structure, F-type ATPases have 2 components, CF(1) - the catalytic core - and CF(0) - the membrane proton channel. CF(1) has five subunits: alpha(3), beta(3), gamma(1), delta(1), epsilon(1). CF(0) has three main subunits: a(1), b(2) and c(9-12). The alpha and beta chains form an alternating ring which encloses part of the gamma chain. CF(1) is attached to CF(0) by a central stalk formed by the gamma and epsilon chains, while a peripheral stalk is formed by the delta and b chains.

It is found in the cell inner membrane. Its function is as follows. Key component of the proton channel; it plays a direct role in the translocation of protons across the membrane. The polypeptide is ATP synthase subunit a (Saccharophagus degradans (strain 2-40 / ATCC 43961 / DSM 17024)).